The primary structure comprises 338 residues: 3-keto-steroid reductase erg27 (338 aa).

NADP(+) is bound by residues Leu16, Thr44, Lys50, and Asp75. Residues Ser180 and Tyr203 each act as proton donor in the active site. NADP(+) contacts are provided by Tyr203, Lys207, and Thr236. The active-site Lowers pKa of active site Tyr is the Lys207.

The protein belongs to the short-chain dehydrogenases/reductases (SDR) family. ERG27 subfamily. Heterotetramer of erg25, erg26, erg27 and erg28. Erg28 acts as a scaffold to tether erg27 and other 4,4-demethylation-related enzymes, forming a demethylation enzyme complex, in the endoplasmic reticulum.

It carries out the reaction 3-dehydro-4alpha-methylzymosterol + NADPH + H(+) = 4alpha-methylzymosterol + NADP(+). It participates in steroid biosynthesis; zymosterol biosynthesis; zymosterol from lanosterol: step 5/6. It functions in the pathway steroid metabolism; ergosterol biosynthesis. Functionally, 3-keto-steroid reductase; part of the third module of ergosterol biosynthesis pathway that includes by the late steps of the pathway. Erg27 is a catalytic component of the C-4 demethylation complex that catalyze the reduction of the keto group on the C-3. The third module or late pathway involves the ergosterol synthesis itself through consecutive reactions that mainly occur in the endoplasmic reticulum (ER) membrane. Firstly, the squalene synthase erg9 catalyzes the condensation of 2 farnesyl pyrophosphate moieties to form squalene, which is the precursor of all steroids. Secondly, squalene is converted into lanosterol by the consecutive action of the squalene epoxidase erg1 and the lanosterol synthase erg7. The lanosterol 14-alpha-demethylase erg11/cyp1 catalyzes C14-demethylation of lanosterol to produce 4,4'-dimethyl cholesta-8,14,24-triene-3-beta-ol. In the next steps, a complex process involving various demethylation, reduction and desaturation reactions catalyzed by the C-14 reductase erg24 and the C-4 demethylation complex erg25-erg26-erg27 leads to the production of zymosterol. Erg28 likely functions in the C-4 demethylation complex reaction by tethering erg26 and Erg27 to the endoplasmic reticulum or to facilitate interaction between these proteins. Then, the sterol 24-C-methyltransferase erg6 catalyzes the methyl transfer from S-adenosyl-methionine to the C-24 of zymosterol to form fecosterol. The C-8 sterol isomerase erg2 catalyzes the reaction which results in unsaturation at C-7 in the B ring of sterols and thus converts fecosterol to episterol. The sterol-C5-desaturases erg31 and erg32 then catalyze the introduction of a C-5 double bond in the B ring to produce 5-dehydroepisterol. The C-22 sterol desaturase erg5 further converts 5-dehydroepisterol into ergosta-5,7,22,24(28)-tetraen-3beta-ol by forming the C-22(23) double bond in the sterol side chain. Finally, ergosta-5,7,22,24(28)-tetraen-3beta-ol is substrate of the C-24(28) sterol reductase erg4 to produce ergosterol. In the genus Schizosaccharomyces, a second route exists between lanosterol and fecosterol, via the methylation of lanosterol to eburicol by erg6, followed by C14-demethylation by erg11/cyp1 and C4-demethylation by the demethylation complex erg25-erg26-erg27. The protein is 3-keto-steroid reductase erg27 of Schizosaccharomyces pombe (strain 972 / ATCC 24843) (Fission yeast).